A 151-amino-acid chain; its full sequence is Aspartate carbamoyltransferase regulatory chain (151 aa).

Zn(2+) contacts are provided by Cys108, Cys113, Cys138, and Cys141.

Belongs to the PyrI family. As to quaternary structure, contains catalytic and regulatory chains. The cofactor is Zn(2+).

Functionally, involved in allosteric regulation of aspartate carbamoyltransferase. This chain is Aspartate carbamoyltransferase regulatory chain, found in Pyrobaculum islandicum (strain DSM 4184 / JCM 9189 / GEO3).